Reading from the N-terminus, the 293-residue chain is Epidermal growth factor-like protein 8 (293 aa).

The N-terminal stretch at 1–28 (MGLWAELCISLRGLSFFLVLMTGEGTRG) is a signal peptide. Residues 34–112 (SLGVCSKQTL…PHPGALTCDA (79 aa)) form the EMI domain. 9 disulfides stabilise this stretch: C38–C97, C65–C71, C96–C110, C114–C124, C118–C130, C132–C141, C148–C159, C155–C168, and C170–C183. N-linked (GlcNAc...) asparagine glycosylation is present at N50. An EGF-like 1 domain is found at 111 to 142 (DAICSKPCLNGGVCTGPDRCECAPGWGGKHCH). Positions 144-184 (DVDECRASLTLCSHGCLNTLGSFLCSCPHPLVLGLDGRTCA) constitute an EGF-like 2; calcium-binding domain. Positions 206 to 235 (SEEERALRWEVAELRGRLEKLEQWATQAGA) form a coiled coil.

Ubiquitously expressed in brain, kidney, thymus and lung.

Its subcellular location is the secreted. The polypeptide is Epidermal growth factor-like protein 8 (Egfl8) (Mus musculus (Mouse)).